We begin with the raw amino-acid sequence, 418 residues long: Actin-related protein 3-A (418 aa).

This sequence belongs to the actin family. ARP3 subfamily. In terms of assembly, component of the Arp2/3 complex composed of actr2/arp2, actr3/arp3, arpc1 (arpc1a or arpc1b), arpc2, arpc3, arpc4 and arpc5.

It is found in the cytoplasm. Its subcellular location is the cytoskeleton. It localises to the cell projection. The protein localises to the nucleus. Functionally, ATP-binding component of the Arp2/3 complex, a multiprotein complex that mediates actin polymerization upon stimulation by nucleation-promoting factor (NPF). The Arp2/3 complex mediates the formation of branched actin networks in the cytoplasm, providing the force for cell motility. Seems to contact the pointed end of the daughter actin filament. In addition to its role in the cytoplasmic cytoskeleton, the Arp2/3 complex also promotes actin polymerization in the nucleus, thereby regulating gene transcription and repair of damaged DNA. The Arp2/3 complex promotes homologous recombination (HR) repair in response to DNA damage by promoting nuclear actin polymerization, leading to drive motility of double-strand breaks (DSBs). This is Actin-related protein 3-A from Xenopus laevis (African clawed frog).